The sequence spans 611 residues: Zinc metalloproteinase-disintegrin-like ohanin (611 aa).

A signal peptide spans 1 to 20 (MIQVLLVTICLVVFPYQGSS). A propeptide spanning residues 21-187 (IILESGKVND…WESDEPIEKI (167 aa)) is cleaved from the precursor. The region spanning 198 to 393 (KYLELYIVAD…DTPQCLINKP (196 aa)) is the Peptidase M12B domain. 2 N-linked (GlcNAc...) asparagine glycosylation sites follow: asparagine 217 and asparagine 260. Disulfide bonds link cysteine 307-cysteine 388, cysteine 347-cysteine 372, and cysteine 349-cysteine 354. Histidine 332 contacts Zn(2+). Glutamate 333 is a catalytic residue. Zn(2+) contacts are provided by histidine 336 and histidine 342. An N-linked (GlcNAc...) asparagine glycan is attached at asparagine 395. The Disintegrin domain maps to 401–487 (NAVCGNYVEE…ECPMDRFHKN (87 aa)). Disulfide bonds link cysteine 404/cysteine 433, cysteine 415/cysteine 428, cysteine 417/cysteine 423, cysteine 427/cysteine 450, cysteine 441/cysteine 447, cysteine 446/cysteine 472, cysteine 459/cysteine 479, cysteine 466/cysteine 498, cysteine 491/cysteine 503, cysteine 510/cysteine 560, cysteine 525/cysteine 578, cysteine 538/cysteine 548, cysteine 555/cysteine 603, and cysteine 597/cysteine 608. The D/ECD-tripeptide motif lies at 465–467 (ECD). A glycan (N-linked (GlcNAc...) asparagine) is linked at asparagine 528.

This sequence belongs to the venom metalloproteinase (M12B) family. P-III subfamily. P-IIIa sub-subfamily. As to quaternary structure, monomer. The cofactor is Zn(2+). Expressed by the venom gland.

It localises to the secreted. Its activity is regulated as follows. Inhibited by EDTA, but not by PMSF. Functionally, snake venom zinc metalloproteinase that has hemorrhagic activity. Inhibits ADP-, TMVA- and stejnulxin-induced platelet aggregation in a dose-dependent manner (on washed platelet, but not on platelet rich plasm). Also specifically degrades alpha-chain of fibrinogen (FGA). The polypeptide is Zinc metalloproteinase-disintegrin-like ohanin (Ophiophagus hannah (King cobra)).